The sequence spans 246 residues: Probable septum site-determining protein MinC (246 aa).

It belongs to the MinC family. Interacts with MinD and FtsZ.

In terms of biological role, cell division inhibitor that blocks the formation of polar Z ring septums. Rapidly oscillates between the poles of the cell to destabilize FtsZ filaments that have formed before they mature into polar Z rings. Prevents FtsZ polymerization. In Pseudomonas syringae pv. syringae (strain B728a), this protein is Probable septum site-determining protein MinC.